A 44-amino-acid chain; its full sequence is Defensin heliomicin (44 aa).

3 disulfide bridges follow: cysteine 7/cysteine 32, cysteine 18/cysteine 40, and cysteine 22/cysteine 42.

Its subcellular location is the secreted. Functionally, this peptide has potent anti-fungal activity. Has no activity against Gram-negative and Gram-positive bacteria. The polypeptide is Defensin heliomicin (Heliothis virescens (Tobacco budworm moth)).